Reading from the N-terminus, the 356-residue chain is uncharacterized protein (356 aa).

This is an uncharacterized protein from Methanocaldococcus jannaschii (strain ATCC 43067 / DSM 2661 / JAL-1 / JCM 10045 / NBRC 100440) (Methanococcus jannaschii).